The primary structure comprises 276 residues: Large ribosomal subunit protein uL2 (276 aa).

A disordered region spans residues 212 to 276; that stretch reads NRHRGIRPQT…KLIISRKKHK (65 aa). Positions 257–276 are enriched in basic residues; the sequence is YKTRKKKASDKLIISRKKHK.

The protein belongs to the universal ribosomal protein uL2 family. In terms of assembly, part of the 50S ribosomal subunit. Forms a bridge to the 30S subunit in the 70S ribosome.

Functionally, one of the primary rRNA binding proteins. Required for association of the 30S and 50S subunits to form the 70S ribosome, for tRNA binding and peptide bond formation. It has been suggested to have peptidyltransferase activity; this is somewhat controversial. Makes several contacts with the 16S rRNA in the 70S ribosome. The sequence is that of Large ribosomal subunit protein uL2 from Helicobacter pylori (strain P12).